A 327-amino-acid chain; its full sequence is MHSATMVFKRAATPHPEKAEWSVDDVEALLGLPFMELVFRAAEIHRQFFDPTKVQLSTLVSIKTGGCPEDCGYCPQSVHHDTPVADQPMMTVDEVVAAARQAKANGAGRFCMGAAWRGPKDADLQKTLDMVREVKALGLETCATFGLLRDGQAEQLKDAGLDYYNHNLDTAPDKYGDIIQTREYEDRLDTLGKVRKAGLSVCCGGIVGMNETRRDRAGLIVQLANLDPQPESVPVNNLVQVVGTPLEGAERLDWTEFVRTIAVARITMPASYVRLSAGRREMDEATQALCFLAGANSIFYGDKLLTTGNPDVVADQSLMAKLNLQPL.

In terms of domain architecture, Radical SAM core spans 52–279 (TKVQLSTLVS…ASYVRLSAGR (228 aa)). Positions 67, 71, and 74 each coordinate [4Fe-4S] cluster. [2Fe-2S] cluster is bound by residues Cys-111, Cys-142, Cys-202, and Arg-274.

It belongs to the radical SAM superfamily. Biotin synthase family. Homodimer. Requires [4Fe-4S] cluster as cofactor. [2Fe-2S] cluster serves as cofactor.

The enzyme catalyses (4R,5S)-dethiobiotin + (sulfur carrier)-SH + 2 reduced [2Fe-2S]-[ferredoxin] + 2 S-adenosyl-L-methionine = (sulfur carrier)-H + biotin + 2 5'-deoxyadenosine + 2 L-methionine + 2 oxidized [2Fe-2S]-[ferredoxin]. It participates in cofactor biosynthesis; biotin biosynthesis; biotin from 7,8-diaminononanoate: step 2/2. Functionally, catalyzes the conversion of dethiobiotin (DTB) to biotin by the insertion of a sulfur atom into dethiobiotin via a radical-based mechanism. In Chromobacterium violaceum (strain ATCC 12472 / DSM 30191 / JCM 1249 / CCUG 213 / NBRC 12614 / NCIMB 9131 / NCTC 9757 / MK), this protein is Biotin synthase.